The chain runs to 334 residues: Large ribosomal subunit protein uL3 (334 aa).

A compositionally biased stretch (basic residues) spans 1–10; that stretch reads MGMKKSRPRR. Residues 1–20 are disordered; sequence MGMKKSRPRRGSLAFSPRKR.

It belongs to the universal ribosomal protein uL3 family. As to quaternary structure, part of the 50S ribosomal subunit. Forms a cluster with proteins L14 and L24e.

Functionally, one of the primary rRNA binding proteins, it binds directly near the 3'-end of the 23S rRNA, where it nucleates assembly of the 50S subunit. This Methanococcus maripaludis (strain C7 / ATCC BAA-1331) protein is Large ribosomal subunit protein uL3.